A 138-amino-acid polypeptide reads, in one-letter code: MRTLWIMAVLLLGVKGNLLQFELMIKKMSGRSGIRWYSDYGCYCGKGGHGQPQDATDRCCFVHDCCYGKVSGCDPKMAFYKYSSDNNDIVCGGNNPCLKEICECDRAAAICFRDNLSTYDNKYWNVPSETCQVESEPC.

The N-terminal stretch at 1 to 16 is a signal peptide; sequence MRTLWIMAVLLLGVKG. 7 disulfide bridges follow: cysteine 42–cysteine 131, cysteine 44–cysteine 60, cysteine 59–cysteine 111, cysteine 65–cysteine 138, cysteine 66–cysteine 104, cysteine 73–cysteine 97, and cysteine 91–cysteine 102. Ca(2+) is bound by residues tyrosine 43, glycine 45, and glycine 47. Histidine 63 is an active-site residue. Aspartate 64 provides a ligand contact to Ca(2+). Aspartate 105 is a catalytic residue.

Monomer. Requires Ca(2+) as cofactor. As to expression, expressed by the venom gland.

It localises to the secreted. It catalyses the reaction a 1,2-diacyl-sn-glycero-3-phosphocholine + H2O = a 1-acyl-sn-glycero-3-phosphocholine + a fatty acid + H(+). In terms of biological role, snake venom phospholipase A2 (PLA2) that impairs hemostasis. It weakly inhibits ADP-induced platelet aggregation when tested on platelet rich plasma from human and rabbit blood (15-25% of inhibition at 5-10 ug of enzyme), and dose-dependently inhibits blood coagulation, possibly by inhibiting thrombin activation. Exhibits high hydrolytic activities toward L-dipalmitoyl phosphatidylcholine. PLA2 catalyzes the calcium-dependent hydrolysis of the 2-acyl groups in 3-sn-phosphoglycerides. This chain is Acidic phospholipase A2 Tpu-E6a, found in Craspedocephalus puniceus (Flat-nosed pitviper).